Consider the following 156-residue polypeptide: Snaclec A3 (156 aa).

Positions 1–23 (MGRSISVSFGLLVVFLSLSGTGA) are cleaved as a signal peptide. Disulfide bonds link cysteine 27–cysteine 38, cysteine 55–cysteine 154, and cysteine 129–cysteine 146. One can recognise a C-type lectin domain in the interval 34–155 (HEGHCYKVFN…CGQPYRFTCE (122 aa)).

The protein belongs to the snaclec family. As to quaternary structure, heterodimer; disulfide-linked. In terms of tissue distribution, expressed by the venom gland.

The protein resides in the secreted. Its function is as follows. Interferes with one step of hemostasis (modulation of platelet aggregation, or coagulation cascade, for example). This is Snaclec A3 from Macrovipera lebetinus (Levantine viper).